A 388-amino-acid chain; its full sequence is Cell adhesion molecule 4 (388 aa).

The N-terminal stretch at 1–20 (MGRARRFQWPLLLLWAAAAG) is a signal peptide. The Ig-like V-type domain maps to 21-119 (PGTGQEVQTE…DTHHQIATLT (99 aa)). The Extracellular portion of the chain corresponds to 25–324 (QEVQTENVTV…VEAQTSVPYA (300 aa)). N-linked (GlcNAc...) asparagine glycosylation is found at Asn-31 and Asn-67. Intrachain disulfides connect Cys-44/Cys-104, Cys-145/Cys-199, and Cys-245/Cys-291. Ig-like C2-type domains are found at residues 124–219 (PENP…YVLD) and 224–307 (PTAR…YVLV). N-linked (GlcNAc...) asparagine glycosylation occurs at Asn-286. Residues 325 to 345 (IVGGILALLVFLIICVLVGMV) form a helical membrane-spanning segment. At 346–388 (WCSVRQKGSYLTHEASGLDEQGEAREAFLNGGDGHKRKEEFFI) the chain is on the cytoplasmic side. Ser-361 bears the Phosphoserine mark.

The protein belongs to the nectin family. Monomer and homodimer. N-glycosylated. Expressed in the brain and several organs including the kidney and liver.

It is found in the membrane. In terms of biological role, involved in the cell-cell adhesion. Has calcium- and magnesium-independent cell-cell adhesion activity. May have tumor-suppressor activity. The chain is Cell adhesion molecule 4 (Cadm4) from Mus musculus (Mouse).